A 399-amino-acid chain; its full sequence is Delta(12) acyl-lipid conjugase (11E,13E-forming) (399 aa).

The interval 11-30 (RNGGGPKKKMGPGQGLGPGE) is disordered. 2 helical membrane-spanning segments follow: residues 61–81 (FSYL…ADTY) and 93–113 (LAWP…WGIA). A Histidine box-1 motif is present at residues 114–118 (HDCGH). Residues 126–146 (LVDDVVGFLIHSLVFVPYFSF) form a helical membrane-spanning segment. The short motif at 150-154 (HRRHH) is the Histidine box-2 element. The next 3 membrane-spanning stretches (helical) occupy residues 188-208 (VFII…FNIS), 232-252 (VLVH…YRIA), and 258-278 (GWLI…VVLI). Positions 325-329 (HVVHH) match the Histidine box-3 motif.

This sequence belongs to the fatty acid desaturase type 1 family. In terms of tissue distribution, expressed in developing seeds, but not in leaves.

It is found in the membrane. The enzyme catalyses a (9Z,12Z)-octadecadienoyl-containing glycerolipid + 2 Fe(II)-[cytochrome b5] + O2 + 2 H(+) = a (9Z,11E,13E)-octadecatrienoyl-containing glycerolipid + 2 Fe(III)-[cytochrome b5] + 2 H2O. The catalysed reaction is (9Z,12Z,15Z)-octadecatrienoyl-containing glycerolipid + 2 Fe(II)-[cytochrome b5] + O2 + 2 H(+) = a (9Z,11E,13E,15Z)-octadecatetraenoyl-containing glycerolipid + 2 Fe(III)-[cytochrome b5] + 2 H2O. The protein operates within lipid metabolism; polyunsaturated fatty acid biosynthesis. In terms of biological role, converts linoleic acid to alpha-eleostearic acid (18:3(9Z,11E,13E)) and alpha-linolenic acid to alpha-parinaric acid (18:4(9Z,11E, 13E, 15Z)). Converts a single cis double bond at carbon 12 to two conjugated trans bonds at positions 11 and 13. This chain is Delta(12) acyl-lipid conjugase (11E,13E-forming), found in Momordica charantia (Bitter gourd).